The following is a 1232-amino-acid chain: Protein transport protein sec-16A.1 (1232 aa).

Disordered regions lie at residues 18-134 (GASG…SGYA), 172-193 (RNGF…EEDE), 815-843 (PVQE…KWHD), 866-942 (KPIA…VVPE), 972-1069 (QPIP…PQKQ), and 1140-1232 (PHLM…QNND). Polar residues predominate over residues 26-37 (DWNNPYNASPPS). Over residues 67 to 76 (RPILIQPARP) the composition is skewed to low complexity. Positions 78–100 (SQKSNRQGTGMSNGSRGLNSTFN) are enriched in polar residues. Residues 817–836 (QESQQHVPQPQPVENKSISS) show a composition bias toward polar residues. Residues 896-914 (SSVTVAASASRTSTLTSST) are compositionally biased toward low complexity. Composition is skewed to polar residues over residues 1046-1060 (QQAT…NAKT), 1149-1159 (SNKSSTNSLRS), and 1168-1178 (YLQSGMATSQA). The segment covering 1194-1203 (PMSFSFMPAP) has biased composition (low complexity). Positions 1222 to 1232 (PSESLSKQNND) are enriched in polar residues.

The protein belongs to the SEC16 family. As to quaternary structure, interacts with tfg-1 (via N-terminus); the interaction is direct and is required for both the localization of tfg-1 and to maintain the distribution of sec-16A.1 at endoplasmic reticulum exit sites (ERES).

The protein localises to the endoplasmic reticulum. Its subcellular location is the endoplasmic reticulum-Golgi intermediate compartment. In terms of biological role, plays a role in the organization of the endoplasmic reticulum exit sites (ERES), also known as transitional endoplasmic reticulum (tER). In association with tfg-1, accumulates at ERES to positively regulate secretory cargo trafficking from the endoplasmic reticulum to the endoplasmic reticulum-Golgi intermediate compartment (ERGIC) and Golgi apparatus. This chain is Protein transport protein sec-16A.1, found in Caenorhabditis elegans.